Consider the following 159-residue polypeptide: Ribosomal RNA large subunit methyltransferase H (159 aa).

Residues Leu76, Gly108, and 127 to 132 (FSRMTF) each bind S-adenosyl-L-methionine.

This sequence belongs to the RNA methyltransferase RlmH family. As to quaternary structure, homodimer.

Its subcellular location is the cytoplasm. It catalyses the reaction pseudouridine(1915) in 23S rRNA + S-adenosyl-L-methionine = N(3)-methylpseudouridine(1915) in 23S rRNA + S-adenosyl-L-homocysteine + H(+). Its function is as follows. Specifically methylates the pseudouridine at position 1915 (m3Psi1915) in 23S rRNA. In Bacillus licheniformis (strain ATCC 14580 / DSM 13 / JCM 2505 / CCUG 7422 / NBRC 12200 / NCIMB 9375 / NCTC 10341 / NRRL NRS-1264 / Gibson 46), this protein is Ribosomal RNA large subunit methyltransferase H.